Reading from the N-terminus, the 145-residue chain is Peptide methionine sulfoxide reductase MsrB (145 aa).

One can recognise a MsrB domain in the interval 6–129 (KNERLKQLTD…NSAALRFIPV (124 aa)). The active-site Nucleophile is the cysteine 118.

The protein belongs to the MsrB Met sulfoxide reductase family.

It catalyses the reaction L-methionyl-[protein] + [thioredoxin]-disulfide + H2O = L-methionyl-(R)-S-oxide-[protein] + [thioredoxin]-dithiol. The protein is Peptide methionine sulfoxide reductase MsrB of Listeria innocua serovar 6a (strain ATCC BAA-680 / CLIP 11262).